The chain runs to 340 residues: Toxin coregulated pilus biosynthesis protein E (340 aa).

The next 3 helical transmembrane spans lie at 108-131 (AISSMITPSVMLIVTMVVIAGYSV), 146-161 (WPGVTQALYNLGFSLY), and 312-333 (NISLITLALSVIWIFGAIFSLV).

Belongs to the GSP F family.

It localises to the cell inner membrane. Probably involved in cholera toxin receptor (GM1) interaction in order to bring the cells within close proximity of the ganglioside for efficient toxin delivery. This chain is Toxin coregulated pilus biosynthesis protein E (tcpE), found in Vibrio cholerae serotype O1 (strain ATCC 39315 / El Tor Inaba N16961).